The sequence spans 424 residues: MSEATLSSKQTIEWENKYSAHNYHPLPVVFHKAKGAHVWDPEGKLYLDFLSAYSAVNQGHCHPHIIKALTEQAQTLTLSSRAFHNDVYAQFAKFVTEFFGFETVLPMNTGAEAVETALKLARRWGYMKKNIPQDKAIILGAEGNFHGRTFGAISLSTDYEDSKLHFGPFVPNVASGHSVHKIRYGHAEDFVPILESPEGKNVAAIILEPIQGEAGIVVPPADYFPKVSALCRKHNVLLIVDEIQTGIGRTGELLCYDHYKAEAKPDIVLLGKALSGGVLPVSCVLSSHDIMSCFTPGSHGSTFGGNPLASRVAIAALEVIRDEKLCQRAAQLGSSFIAQLKALQAKSNGIISEVRGMGLLTAIVIDPSKANGKTAWDLCLLMKDHGLLAKPTHDHIIRLAPPLVISEEDLQTGVETIAKCIDLL.

At K272 the chain carries N6-(pyridoxal phosphate)lysine. K390 is covalently cross-linked (Glycyl lysine isopeptide (Lys-Gly) (interchain with G-Cter in ubiquitin)).

It belongs to the class-III pyridoxal-phosphate-dependent aminotransferase family. Pyridoxal 5'-phosphate is required as a cofactor.

It localises to the cytoplasm. The catalysed reaction is a 2-oxocarboxylate + L-ornithine = L-glutamate 5-semialdehyde + an L-alpha-amino acid. Its pathway is amino-acid biosynthesis; L-proline biosynthesis; L-glutamate 5-semialdehyde from L-ornithine: step 1/1. Its activity is regulated as follows. By arginine and urea. Catalyzes the transamination of ornithine into L-glutamate gamma-semialdehyde, the second step of arginine degradation. The chain is Ornithine aminotransferase (CAR2) from Saccharomyces cerevisiae (strain ATCC 204508 / S288c) (Baker's yeast).